The sequence spans 82 residues: Musculoskeletal embryonic nuclear protein 1 (82 aa).

The interval 1-34 (MSQAGAQEAPIKKKRPPVKEEDLKGARGNLTKNQ) is disordered. S2 is subject to Phosphoserine. Positions 10 to 18 (PIKKKRPPV) match the Nuclear localization signal motif.

It belongs to the MUSTN1 family.

The protein resides in the nucleus. It is found in the cytoplasm. Its subcellular location is the secreted. The protein localises to the extracellular space. In terms of biological role, required for chondrocyte development and proliferation. Plays a role in myoblast differentiation and fusion. Modulates skeletal muscle extracellular matrix composition. Plays a role in skeletal muscle function. Plays a role in glucose homeostasis. This Bos taurus (Bovine) protein is Musculoskeletal embryonic nuclear protein 1 (MUSTN1).